The chain runs to 212 residues: 3-isopropylmalate dehydratase small subunit (212 aa).

It belongs to the LeuD family. LeuD type 1 subfamily. Heterodimer of LeuC and LeuD.

It carries out the reaction (2R,3S)-3-isopropylmalate = (2S)-2-isopropylmalate. The protein operates within amino-acid biosynthesis; L-leucine biosynthesis; L-leucine from 3-methyl-2-oxobutanoate: step 2/4. Its function is as follows. Catalyzes the isomerization between 2-isopropylmalate and 3-isopropylmalate, via the formation of 2-isopropylmaleate. The sequence is that of 3-isopropylmalate dehydratase small subunit from Nitrosomonas eutropha (strain DSM 101675 / C91 / Nm57).